Reading from the N-terminus, the 397-residue chain is Phosphoglycerate kinase (397 aa).

Residues 22–24 (DLN), Arg37, 60–63 (HFGR), Arg119, and Arg152 each bind substrate. ATP-binding positions include Lys202, Glu324, and 354 to 357 (GGDT).

This sequence belongs to the phosphoglycerate kinase family. As to quaternary structure, monomer.

The protein resides in the cytoplasm. It carries out the reaction (2R)-3-phosphoglycerate + ATP = (2R)-3-phospho-glyceroyl phosphate + ADP. The protein operates within carbohydrate degradation; glycolysis; pyruvate from D-glyceraldehyde 3-phosphate: step 2/5. The protein is Phosphoglycerate kinase (pgk) of Zymomonas mobilis subsp. mobilis (strain ATCC 31821 / ZM4 / CP4).